Consider the following 623-residue polypeptide: Phosphoenolpyruvate carboxykinase [GTP] (623 aa).

Residues arginine 86 and 220–222 each bind substrate; that span reads YGG. Mn(2+)-binding residues include lysine 229 and histidine 248. Serine 270 is a substrate binding site. Residue 271-276 coordinates GTP; the sequence is MCGKTS. The active site involves cysteine 272. Aspartate 289 lines the Mn(2+) pocket. 384–386 contacts substrate; that stretch reads NAR. 2 residues coordinate GTP: arginine 386 and arginine 418.

The protein belongs to the phosphoenolpyruvate carboxykinase [GTP] family. In terms of assembly, homotetramer. It depends on Mn(2+) as a cofactor.

It is found in the cytoplasm. The enzyme catalyses oxaloacetate + GTP = phosphoenolpyruvate + GDP + CO2. It functions in the pathway carbohydrate biosynthesis; gluconeogenesis. Functionally, involved in the gluconeogenesis. Catalyzes the conversion of oxaloacetate (OAA) to phosphoenolpyruvate (PEP), the rate-limiting step in the metabolic pathway that produces glucose from lactate and other precursors derived from the citric acid cycle. This is Phosphoenolpyruvate carboxykinase [GTP] (pckG) from Thermococcus kodakarensis (strain ATCC BAA-918 / JCM 12380 / KOD1) (Pyrococcus kodakaraensis (strain KOD1)).